A 426-amino-acid chain; its full sequence is Histidine--tRNA ligase (426 aa).

The protein belongs to the class-II aminoacyl-tRNA synthetase family. As to quaternary structure, homodimer.

Its subcellular location is the cytoplasm. It carries out the reaction tRNA(His) + L-histidine + ATP = L-histidyl-tRNA(His) + AMP + diphosphate + H(+). In Geobacillus thermodenitrificans (strain NG80-2), this protein is Histidine--tRNA ligase.